Reading from the N-terminus, the 802-residue chain is Serine/threonine-protein kinase zyg-8 (802 aa).

Polar residues predominate over residues 1–13 (MPQTSAWQLNDTT). Residues 1–102 (MPQTSAWQLN…SAPSTSSAHR (102 aa)) are disordered. Pro residues predominate over residues 15–24 (RPPPPPPPPG). The segment covering 89–99 (SPSSSAPSTSS) has biased composition (low complexity). Doublecortin domains are found at residues 211–298 (KRLR…VDYS) and 340–423 (RIIK…ADDL). Positions 430 to 470 (HKSVGSGTSSNMRRTSRRSTMPNRNESLRHDRSGSVIPDQD) are disordered. The span at 434-454 (GSGTSSNMRRTSRRSTMPNRN) shows a compositional bias: low complexity. The Protein kinase domain maps to 482–743 (FQLVRLIGDG…AGELLNDEWM (262 aa)). ATP contacts are provided by residues 488-496 (IGDGNTAVV) and lysine 512. The active-site Proton acceptor is aspartate 604.

The protein belongs to the protein kinase superfamily. CAMK Ser/Thr protein kinase family. CaMK subfamily. Interacts with tac-1. As to expression, expressed in AFD thermosensory neurons. Expressed in cells near the nerve ring, in motor neurons in the ventral nerve cord and in the six touch receptor neurons including ALML/R, PLML/R and AVM and PVM. Expressed in hypodermal and neural tissues and in the germline.

It localises to the cytoplasm. Its subcellular location is the cytoskeleton. It is found in the microtubule organizing center. The protein resides in the centrosome. The protein localises to the spindle. It catalyses the reaction L-seryl-[protein] + ATP = O-phospho-L-seryl-[protein] + ADP + H(+). The enzyme catalyses L-threonyl-[protein] + ATP = O-phospho-L-threonyl-[protein] + ADP + H(+). Functionally, probable kinase. Kinase activity may be involved in positioning of spindle poles in meiosis and mitosis. Plays a role in spindle positioning during asymmetric division of one-cell stage embryos. Affects spindle position by promoting microtubule assembly during anaphase. Plays a role in the assembly and stability of oocyte spindle, perhaps balancing the forces in the spindle and maintaining their morphology during metaphase. Plays a role in cell division and in embryonic viability up until gastrulation. Required for neuronal morphology and polarity and restricting ectopic process outgrowth; probably as a result of a role in maintaining microtubule integrity. Involved in maintaining neuronal microtubule number, length and packing. May promote axonal and synaptic growth. Plays a role in regulating thermotaxis responses in AFD thermosensory neurons. Required for touch sensitivity in adult touch response receptor neurons. The protein is Serine/threonine-protein kinase zyg-8 of Caenorhabditis elegans.